A 122-amino-acid chain; its full sequence is Small ribosomal subunit protein uS12 (122 aa).

The tract at residues 1–45 is disordered; it reads MPTTNQLVRKERKRQTKKTATPALQGSPQRRGVCTRVSTTTPKKP. The segment covering 18–28 has biased composition (polar residues); the sequence is KTATPALQGSP. Residue aspartate 89 is modified to 3-methylthioaspartic acid.

The protein belongs to the universal ribosomal protein uS12 family. In terms of assembly, part of the 30S ribosomal subunit. Contacts proteins S8 and S17. May interact with IF1 in the 30S initiation complex.

In terms of biological role, with S4 and S5 plays an important role in translational accuracy. Its function is as follows. Interacts with and stabilizes bases of the 16S rRNA that are involved in tRNA selection in the A site and with the mRNA backbone. Located at the interface of the 30S and 50S subunits, it traverses the body of the 30S subunit contacting proteins on the other side and probably holding the rRNA structure together. The combined cluster of proteins S8, S12 and S17 appears to hold together the shoulder and platform of the 30S subunit. In Rubrobacter xylanophilus (strain DSM 9941 / JCM 11954 / NBRC 16129 / PRD-1), this protein is Small ribosomal subunit protein uS12.